Here is a 205-residue protein sequence, read N- to C-terminus: Large ribosomal subunit protein uL4 (205 aa).

The protein belongs to the universal ribosomal protein uL4 family. As to quaternary structure, part of the 50S ribosomal subunit. Contacts proteins L15 and L34.

Functionally, one of the primary rRNA binding proteins, this protein initially binds near the 5'-end of the 23S rRNA. It is important during the early stages of 50S assembly. Its function is as follows. Makes multiple contacts with different domains of the 23S rRNA in the assembled 50S subunit. This protein is located close to the polypeptide exit tunnel, and interacts with the modified macrolide azithromycin, which blocks the tunnel. This is Large ribosomal subunit protein uL4 (rplD) from Deinococcus radiodurans (strain ATCC 13939 / DSM 20539 / JCM 16871 / CCUG 27074 / LMG 4051 / NBRC 15346 / NCIMB 9279 / VKM B-1422 / R1).